Here is a 388-residue protein sequence, read N- to C-terminus: MPNNSKHKKKQQRRQQEAQKKSRAKQIETDKKNDEFLDTELDEVSPLVIDDDMTEFKNMPKVELHAHLSGSLSPETIKLIMESDETRAEEIMKKYKLEKPENMTGVFDCFPVIHAILRKPEAIRIAIRQTIKEFEEDNCVYLELRTSPKETDFMTYEDYLQVCIESFEAAKHEFPRIKTFLIVSLDRRMPFETAAHILGLIGEAQQRTNVIVGVELSGDPHLDGRRLLKLFVAARRFHGLGITIHLAEVLQNMADVEDYLNLRPDRIGHGTFLHTDPYTEYLTNKYKIPLEICLSSNVYSKTTTNYRNSHFNYWRKRGVPVFICTDDKGVIPGATLTEEYYKAAITFDLSTEELIGINQDALLNSFAYKYNVTDLTETFRKINNNVLD.

Positions 1–13 (MPNNSKHKKKQQR) are enriched in basic residues. The interval 1–34 (MPNNSKHKKKQQRRQQEAQKKSRAKQIETDKKND) is disordered. Over residues 14–34 (RQQEAQKKSRAKQIETDKKND) the composition is skewed to basic and acidic residues. 2 residues coordinate Zn(2+): His65 and His67. Residues His67, His114, 146–149 (TSPK), Asp186, and Gly218 each bind N(6)-methyl-AMP. Residue His245 participates in Zn(2+) binding. N(6)-methyl-AMP contacts are provided by Glu248, Asp326, and Asp327. Residue Glu248 is the Proton donor of the active site. Asp326 contributes to the Zn(2+) binding site.

It belongs to the metallo-dependent hydrolases superfamily. Adenosine and AMP deaminases family. Monomer. Zn(2+) is required as a cofactor.

It catalyses the reaction N(6)-methyl-AMP + H2O + H(+) = IMP + methylamine. Its function is as follows. Catalyzes the hydrolysis of the free cytosolic methylated adenosine nucleotide N(6)-methyl-AMP (N6-mAMP) to produce inositol monophosphate (IMP) and methylamine. Is required for the catabolism of cytosolic N6-mAMP, which is derived from the degradation of mRNA containing N6-methylated adenine (m6A). In Caenorhabditis elegans, this protein is Adenosine deaminase-like protein.